The sequence spans 191 residues: Leucyl/phenylalanyl-tRNA--protein transferase (191 aa).

This sequence belongs to the L/F-transferase family.

It is found in the cytoplasm. It carries out the reaction N-terminal L-lysyl-[protein] + L-leucyl-tRNA(Leu) = N-terminal L-leucyl-L-lysyl-[protein] + tRNA(Leu) + H(+). The enzyme catalyses N-terminal L-arginyl-[protein] + L-leucyl-tRNA(Leu) = N-terminal L-leucyl-L-arginyl-[protein] + tRNA(Leu) + H(+). It catalyses the reaction L-phenylalanyl-tRNA(Phe) + an N-terminal L-alpha-aminoacyl-[protein] = an N-terminal L-phenylalanyl-L-alpha-aminoacyl-[protein] + tRNA(Phe). Its function is as follows. Functions in the N-end rule pathway of protein degradation where it conjugates Leu, Phe and, less efficiently, Met from aminoacyl-tRNAs to the N-termini of proteins containing an N-terminal arginine or lysine. In Nostoc punctiforme (strain ATCC 29133 / PCC 73102), this protein is Leucyl/phenylalanyl-tRNA--protein transferase.